The sequence spans 362 residues: Probable dual-specificity RNA methyltransferase RlmN (362 aa).

E105 functions as the Proton acceptor in the catalytic mechanism. A Radical SAM core domain is found at 111–344 (HNYGNSVCVT…VTIRREQGHD (234 aa)). An intrachain disulfide couples C118 to C349. Positions 125, 129, and 132 each coordinate [4Fe-4S] cluster. Residues 175-176 (GE), S207, 230-232 (SLH), and N306 each bind S-adenosyl-L-methionine. The active-site S-methylcysteine intermediate is C349.

It belongs to the radical SAM superfamily. RlmN family. Requires [4Fe-4S] cluster as cofactor.

It localises to the cytoplasm. The enzyme catalyses adenosine(2503) in 23S rRNA + 2 reduced [2Fe-2S]-[ferredoxin] + 2 S-adenosyl-L-methionine = 2-methyladenosine(2503) in 23S rRNA + 5'-deoxyadenosine + L-methionine + 2 oxidized [2Fe-2S]-[ferredoxin] + S-adenosyl-L-homocysteine. It catalyses the reaction adenosine(37) in tRNA + 2 reduced [2Fe-2S]-[ferredoxin] + 2 S-adenosyl-L-methionine = 2-methyladenosine(37) in tRNA + 5'-deoxyadenosine + L-methionine + 2 oxidized [2Fe-2S]-[ferredoxin] + S-adenosyl-L-homocysteine. In terms of biological role, specifically methylates position 2 of adenine 2503 in 23S rRNA and position 2 of adenine 37 in tRNAs. This is Probable dual-specificity RNA methyltransferase RlmN from Halalkalibacterium halodurans (strain ATCC BAA-125 / DSM 18197 / FERM 7344 / JCM 9153 / C-125) (Bacillus halodurans).